The following is a 439-amino-acid chain: MSQTHLSNQKFADLPLHPEVKQALAENGFEFCTPIQALSLPVLLQSKDIAGQAQTGTGKTMAFLVATFNHLLSTPIPENRQLNQPRAIIMAPTRELAIQIAKDAILLAKHTHLKVGIVYGGESYDVQRKVLDQGVDILIGTTGRIIDYVRQGIISLNAIQAVVLDEADRMFDLGFIKDIRFLFRRMPNADQRLNMLFSATLSMKVQELAYDHMNDPVKVEIAPEEKTSKNIKEEIFYPSQEDKIRLLLTLIEEDWPEKAIVFSNTKHSCENLWSWLEGDGHRVGLLTGDVPQKKRIRILEQFTQGQLDILVATDVAARGLHISDVSHVYNYDLPDDCEDYVHRIGRTGRAGNKGVSVSFACEEYALNLPAIESYINHSIPVSNYDRDALLDDIPPPVKIHRKHPAGARNLRERSGAGRPQGAHRSGGRPPRHDRTRRQP.

Residues glutamine 9–alanine 37 carry the Q motif motif. The Helicase ATP-binding domain maps to leucine 40–valine 219. Alanine 53–threonine 60 is an ATP binding site. Residues aspartate 165–aspartate 168 carry the DEAD box motif. Positions lysine 243–leucine 390 constitute a Helicase C-terminal domain. The disordered stretch occupies residues proline 395–proline 439. The span at serine 425–proline 439 shows a compositional bias: basic residues.

The protein belongs to the DEAD box helicase family. RhlB subfamily. Component of the RNA degradosome, which is a multiprotein complex involved in RNA processing and mRNA degradation.

Its subcellular location is the cytoplasm. The catalysed reaction is ATP + H2O = ADP + phosphate + H(+). In terms of biological role, DEAD-box RNA helicase involved in RNA degradation. Has RNA-dependent ATPase activity and unwinds double-stranded RNA. The polypeptide is ATP-dependent RNA helicase RhlB (Shewanella sp. (strain MR-4)).